Reading from the N-terminus, the 134-residue chain is Spermadhesin-1 (134 aa).

Residues 1 to 20 form the signal peptide; that stretch reads MKLSSVIPWALLLSTATVDS. 2 disulfide bridges follow: cysteine 30–cysteine 51 and cysteine 74–cysteine 95. The region spanning 30–131 is the CUB domain; it reads CGGILKEESG…SFYEVLYFQD (102 aa).

It belongs to the spermadhesin family. In terms of tissue distribution, seminal vesicle tissue, ampulla and weakly in tissue of epididymis.

The protein resides in the secreted. Its function is as follows. Stimulates cell division and progesterone secretion of bovine granulosa cells in vitro in a potent and dose dependent manner. This protein appears to be a potent growth factor with effects on ovarian granulosa cells. The chain is Spermadhesin-1 (SPADH1) from Bos taurus (Bovine).